We begin with the raw amino-acid sequence, 339 residues long: UDP-3-O-acylglucosamine N-acyltransferase (339 aa).

H251 (proton acceptor) is an active-site residue.

Belongs to the transferase hexapeptide repeat family. LpxD subfamily. In terms of assembly, homotrimer.

It carries out the reaction a UDP-3-O-[(3R)-3-hydroxyacyl]-alpha-D-glucosamine + a (3R)-hydroxyacyl-[ACP] = a UDP-2-N,3-O-bis[(3R)-3-hydroxyacyl]-alpha-D-glucosamine + holo-[ACP] + H(+). Its pathway is bacterial outer membrane biogenesis; LPS lipid A biosynthesis. Its function is as follows. Catalyzes the N-acylation of UDP-3-O-acylglucosamine using 3-hydroxyacyl-ACP as the acyl donor. Is involved in the biosynthesis of lipid A, a phosphorylated glycolipid that anchors the lipopolysaccharide to the outer membrane of the cell. This Paramagnetospirillum magneticum (strain ATCC 700264 / AMB-1) (Magnetospirillum magneticum) protein is UDP-3-O-acylglucosamine N-acyltransferase.